The following is a 480-amino-acid chain: tRNA modification GTPase MnmE (480 aa).

(6S)-5-formyl-5,6,7,8-tetrahydrofolate is bound by residues R20, E114, and K154. The region spanning G250–E406 is the TrmE-type G domain. N260 provides a ligand contact to K(+). GTP is bound by residues N260–S265, S279–T285, and D304–G307. Position 264 (S264) interacts with Mg(2+). S279, I281, and T284 together coordinate K(+). Mg(2+) is bound at residue T285. (6S)-5-formyl-5,6,7,8-tetrahydrofolate is bound at residue K480.

It belongs to the TRAFAC class TrmE-Era-EngA-EngB-Septin-like GTPase superfamily. TrmE GTPase family. Homodimer. Heterotetramer of two MnmE and two MnmG subunits. K(+) is required as a cofactor.

It is found in the cytoplasm. Exhibits a very high intrinsic GTPase hydrolysis rate. Involved in the addition of a carboxymethylaminomethyl (cmnm) group at the wobble position (U34) of certain tRNAs, forming tRNA-cmnm(5)s(2)U34. The chain is tRNA modification GTPase MnmE from Rickettsia felis (strain ATCC VR-1525 / URRWXCal2) (Rickettsia azadi).